We begin with the raw amino-acid sequence, 793 residues long: Probable alpha-fucosidase A (793 aa).

An N-terminal signal peptide occupies residues 1–20; that stretch reads MLISGSSAALCALALPFAAA. N-linked (GlcNAc...) asparagine glycans are attached at residues N30, N83, N100, N104, N123, N179, N199, N234, N323, N597, N622, N660, and N757.

This sequence belongs to the glycosyl hydrolase 95 family.

The protein resides in the secreted. The catalysed reaction is an alpha-L-fucoside + H2O = L-fucose + an alcohol. In terms of biological role, alpha-fucosidase involved in degradation of fucosylated xyloglucans. Hydrolyzes alpha-1,2-linked fucose. This is Probable alpha-fucosidase A (afcA) from Aspergillus niger (strain ATCC MYA-4892 / CBS 513.88 / FGSC A1513).